We begin with the raw amino-acid sequence, 211 residues long: Thiamine-phosphate synthase (211 aa).

Residues Gln-37–Lys-41 and Asn-69 each bind 4-amino-2-methyl-5-(diphosphooxymethyl)pyrimidine. The Mg(2+) site is built by Asp-70 and Asp-89. Residue Ser-108 participates in 4-amino-2-methyl-5-(diphosphooxymethyl)pyrimidine binding. Thr-134–Thr-136 is a 2-[(2R,5Z)-2-carboxy-4-methylthiazol-5(2H)-ylidene]ethyl phosphate binding site. 4-amino-2-methyl-5-(diphosphooxymethyl)pyrimidine is bound at residue Lys-137. 2-[(2R,5Z)-2-carboxy-4-methylthiazol-5(2H)-ylidene]ethyl phosphate is bound by residues Gly-166 and Val-186 to Ser-187.

This sequence belongs to the thiamine-phosphate synthase family. Requires Mg(2+) as cofactor.

It catalyses the reaction 2-[(2R,5Z)-2-carboxy-4-methylthiazol-5(2H)-ylidene]ethyl phosphate + 4-amino-2-methyl-5-(diphosphooxymethyl)pyrimidine + 2 H(+) = thiamine phosphate + CO2 + diphosphate. It carries out the reaction 2-(2-carboxy-4-methylthiazol-5-yl)ethyl phosphate + 4-amino-2-methyl-5-(diphosphooxymethyl)pyrimidine + 2 H(+) = thiamine phosphate + CO2 + diphosphate. The enzyme catalyses 4-methyl-5-(2-phosphooxyethyl)-thiazole + 4-amino-2-methyl-5-(diphosphooxymethyl)pyrimidine + H(+) = thiamine phosphate + diphosphate. It functions in the pathway cofactor biosynthesis; thiamine diphosphate biosynthesis; thiamine phosphate from 4-amino-2-methyl-5-diphosphomethylpyrimidine and 4-methyl-5-(2-phosphoethyl)-thiazole: step 1/1. Functionally, condenses 4-methyl-5-(beta-hydroxyethyl)thiazole monophosphate (THZ-P) and 2-methyl-4-amino-5-hydroxymethyl pyrimidine pyrophosphate (HMP-PP) to form thiamine monophosphate (TMP). The protein is Thiamine-phosphate synthase of Shigella dysenteriae serotype 1 (strain Sd197).